The following is a 561-amino-acid chain: Arginine--tRNA ligase (561 aa).

The short motif at 129 to 139 is the 'HIGH' region element; sequence ANPTGPLHVGH.

The protein belongs to the class-I aminoacyl-tRNA synthetase family. Monomer.

It is found in the cytoplasm. The catalysed reaction is tRNA(Arg) + L-arginine + ATP = L-arginyl-tRNA(Arg) + AMP + diphosphate. The chain is Arginine--tRNA ligase from Bordetella avium (strain 197N).